A 227-amino-acid polypeptide reads, in one-letter code: Cytidylate kinase (227 aa).

ATP is bound at residue 12 to 20 (GPSGAGKGT).

The protein belongs to the cytidylate kinase family. Type 1 subfamily.

The protein resides in the cytoplasm. It catalyses the reaction CMP + ATP = CDP + ADP. It carries out the reaction dCMP + ATP = dCDP + ADP. This is Cytidylate kinase from Salmonella paratyphi A (strain ATCC 9150 / SARB42).